The sequence spans 873 residues: Alanine--tRNA ligase (873 aa).

The Zn(2+) site is built by His-562, His-566, Cys-664, and His-668.

Belongs to the class-II aminoacyl-tRNA synthetase family. Requires Zn(2+) as cofactor.

Its subcellular location is the cytoplasm. The enzyme catalyses tRNA(Ala) + L-alanine + ATP = L-alanyl-tRNA(Ala) + AMP + diphosphate. Functionally, catalyzes the attachment of alanine to tRNA(Ala) in a two-step reaction: alanine is first activated by ATP to form Ala-AMP and then transferred to the acceptor end of tRNA(Ala). Also edits incorrectly charged Ser-tRNA(Ala) and Gly-tRNA(Ala) via its editing domain. This chain is Alanine--tRNA ligase, found in Photobacterium profundum (strain SS9).